The following is a 430-amino-acid chain: Enolase (430 aa).

Gln-165 serves as a coordination point for (2R)-2-phosphoglycerate. Glu-207 serves as the catalytic Proton donor. Asp-244, Glu-287, and Asp-314 together coordinate Mg(2+). (2R)-2-phosphoglycerate is bound by residues Lys-339, Arg-368, Ser-369, and Lys-390. The active-site Proton acceptor is Lys-339.

This sequence belongs to the enolase family. In terms of assembly, component of the RNA degradosome, a multiprotein complex involved in RNA processing and mRNA degradation. The cofactor is Mg(2+).

The protein resides in the cytoplasm. Its subcellular location is the secreted. It localises to the cell surface. The catalysed reaction is (2R)-2-phosphoglycerate = phosphoenolpyruvate + H2O. It functions in the pathway carbohydrate degradation; glycolysis; pyruvate from D-glyceraldehyde 3-phosphate: step 4/5. In terms of biological role, catalyzes the reversible conversion of 2-phosphoglycerate (2-PG) into phosphoenolpyruvate (PEP). It is essential for the degradation of carbohydrates via glycolysis. This chain is Enolase, found in Xylella fastidiosa (strain M23).